The sequence spans 333 residues: MATAVHRNGSLTPVSLRVFVLVGFGGGALTQALLFAVFLVLYVVTVLGNLTMIVVITLDARLHSPMYFFLKNLSFVDLCYSSAIAPNALANFLSTSKVISFEACATQFFFFSLLATTETFLLAVMAYDRFMAICSPLRYPVTMCPTTCTRLVLGTFCVGCLNSIVQTSLTFQLPFCSSNRIDHFYCDVPPLLQLACASTALNELFLFGLCGFIIVSTTLAVLVSYGYITVTILRMHSGSGRHKVFSTCGSHLTAVSLFYGTLFVMYAQPGALTSMEQGKVVSIFYTLVIPMLNPLIYSLRNKDVKDALQRLGQRHSLVKAVRGCPAAGGNASV.

Topologically, residues 1–35 (MATAVHRNGSLTPVSLRVFVLVGFGGGALTQALLF) are extracellular. Residue Asn-8 is glycosylated (N-linked (GlcNAc...) asparagine). A helical membrane pass occupies residues 36–56 (AVFLVLYVVTVLGNLTMIVVI). At 57-72 (TLDARLHSPMYFFLKN) the chain is on the cytoplasmic side. A helical transmembrane segment spans residues 73–93 (LSFVDLCYSSAIAPNALANFL). The Extracellular portion of the chain corresponds to 94 to 106 (STSKVISFEACAT). Cysteines 104 and 196 form a disulfide. A helical transmembrane segment spans residues 107 to 127 (QFFFFSLLATTETFLLAVMAY). The Cytoplasmic segment spans residues 128-150 (DRFMAICSPLRYPVTMCPTTCTR). Residues 151–171 (LVLGTFCVGCLNSIVQTSLTF) traverse the membrane as a helical segment. Topologically, residues 172 to 203 (QLPFCSSNRIDHFYCDVPPLLQLACASTALNE) are extracellular. The chain crosses the membrane as a helical span at residues 204 to 224 (LFLFGLCGFIIVSTTLAVLVS). Residues 225-251 (YGYITVTILRMHSGSGRHKVFSTCGSH) lie on the Cytoplasmic side of the membrane. Residues 252 to 272 (LTAVSLFYGTLFVMYAQPGAL) traverse the membrane as a helical segment. The Extracellular segment spans residues 273-278 (TSMEQG). The helical transmembrane segment at 279 to 299 (KVVSIFYTLVIPMLNPLIYSL) threads the bilayer. The Cytoplasmic segment spans residues 300-333 (RNKDVKDALQRLGQRHSLVKAVRGCPAAGGNASV).

Belongs to the G-protein coupled receptor 1 family.

It is found in the cell membrane. Odorant receptor. In Mus musculus (Mouse), this protein is Olfactory receptor 9S13.